A 2280-amino-acid chain; its full sequence is Genome polyprotein (2280 aa).

In terms of domain architecture, SF3 helicase spans 454–608; sequence ETQANNIRST…EEWKKRNPGK (155 aa). 480-487 serves as a coordination point for ATP; sequence GAPGIGKT. Residue Y965 is modified to O-(5'-phospho-RNA)-tyrosine. A Peptidase C24 domain is found at 1054–1202; sequence GPTAIVEFTQ…TKVAQRVVKE (149 aa). Active-site for 3CLpro activity residues include H1084, E1105, and C1169. The RdRp catalytic domain maps to 1442-1567; sequence GVLYCLDYSK…SVCPATASIF (126 aa). The tract at residues 1722–1746 is disordered; the sequence is GNGSNPEPKQSNNPMVVDPPGTTGP. Over residues 1723–1735 the composition is skewed to polar residues; it reads NGSNPEPKQSNNP.

In terms of assembly, homodimer. Homomultimer. In terms of processing, specific enzymatic cleavages in vivo yield mature proteins. Pro-Pol is first autocatalytically cleaved, then processes the whole polyprotein. Post-translationally, VPg is uridylylated by the polymerase and is covalently attached to the 5'-end of the polyadenylated genomic and subgenomic RNAs. This uridylylated form acts as a nucleotide-peptide primer for the polymerase.

Its subcellular location is the virion. It localises to the host cytoplasm. The enzyme catalyses a ribonucleoside 5'-triphosphate + H2O = a ribonucleoside 5'-diphosphate + phosphate + H(+). The catalysed reaction is RNA(n) + a ribonucleoside 5'-triphosphate = RNA(n+1) + diphosphate. It carries out the reaction Endopeptidase with a preference for cleavage when the P1 position is occupied by Glu-|-Xaa and the P1' position is occupied by Gly-|-Yaa.. Functionally, together with NTPase and NS4, initiates the formation of the replication complex. Induces the proliferation of the host smooth ER membranes forming long tubular structures. These remodeled membranes probably form the viral factories that contain the replication complex. In terms of biological role, displays NTPase activity, but no helicase activity. Induces the formation of convoluted membranes derived from the host ER. These remodeled membranes probably form the viral factories that contain the replication complex. Together with NS2 and NS4, initiates the formation of the replication complex. Probable key protein responsible for the formation of membrane alterations by the virus. Induces the formation of convoluted membranes derived from the host ER. These remodeled membranes probably form the viral factories that contain the replication complex. Together with NS2 and NTPase, initiates the formation of the replication complex. Its function is as follows. Viral genome-linked protein is covalently linked to the 5'-end of the positive-strand, negative-strand genomic RNAs and subgenomic RNA. Acts as a genome-linked replication primer. May recruit ribosome to viral RNA thereby promoting viral proteins translation. Interacts with host translation initiation complex to allow the translation of viral proteins. Functionally, protease-polymerase p76 processes the polyprotein: Pro-Pol is first released by autocleavage, then all other proteins are cleaved. Cleaves host translation initiation factor eIF4G1, eIF4G2 and PABP1 thereby inducing a shutdown of host protein synthesis. This shutdown may not prevent viral mRNA from being translated since viral Vpg replaces the cap. It is also an RNA-directed RNA polymerase which replicates genomic and antigenomic viral RNA by recognizing specific signals. Also transcribes a subgenomic mRNA by initiating RNA synthesis internally on antigenomic RNA. This sgRNA codes for structural proteins. Catalyzes the covalent attachment VPg with viral RNAs. In terms of biological role, capsid protein self assembles to form an icosahedral capsid with a T=3 symmetry, about 38 nm in diameter, and consisting of 180 capsid proteins. The capsid encapsulate the genomic RNA and VP2 proteins. Attaches virion to target cells, inducing endocytosis of the viral particle. Acidification of the endosome induces conformational change of capsid protein thereby injecting virus genomic RNA into host cytoplasm. The sequence is that of Genome polyprotein from Homo sapiens (Human).